An 897-amino-acid chain; its full sequence is Chromodomain-helicase-DNA-binding protein 1-like (897 aa).

At Arg-9 the chain carries Omega-N-methylarginine. Positions 58–223 (AQRFHCQNGC…YSLLSFVEPD (166 aa)) constitute a Helicase ATP-binding domain. An ATP-binding site is contributed by 71-78 (DEMGLGKT). The short motif at 174–177 (DEAH) is the DEAH box element. In terms of domain architecture, Helicase C-terminal spans 351–513 (LLDKLLAFLY…QKPAADADLQ (163 aa)). A phosphoserine mark is found at Ser-540, Ser-607, Ser-618, Ser-628, and Ser-636. The tract at residues 601–635 (TLLEKASQEGRSLRNKGSVLIPGLVEGSTKRKRVL) is regulatory linker segment (RLS). The tract at residues 615-673 (NKGSVLIPGLVEGSTKRKRVLSPEELEDRQKKRQEAAAKRRRLIEEKKRQKEEAEHKKK) is required for ATPase activity. 2 disordered regions span residues 628-654 (STKR…AAKR) and 687-711 (LPSE…DYQD). The stretch at 638 to 675 (EELEDRQKKRQEAAAKRRRLIEEKKRQKEEAEHKKKMA) forms a coiled coil. Residues 642–654 (DRQKKRQEAAAKR) are compositionally biased toward basic and acidic residues. Residues 690–711 (EESEPEDLENGEESSAELDYQD) show a composition bias toward acidic residues. In terms of domain architecture, Macro spans 704–897 (SAELDYQDPD…SSSSSRQLVP (194 aa)). Ser-891 is subject to Phosphoserine.

This sequence belongs to the SNF2/RAD54 helicase family. Interacts with nucleosomes; interacts with the acidic patch of histones. Interacts (via macro domain) with PARP1; interacts only when PARP1 is poly-ADP-ribosylated (PARylated). Interacts with CIAO1. In terms of tissue distribution, frequently overexpressed in hepatomacellular carcinomas.

The protein localises to the nucleus. The protein resides in the chromosome. The catalysed reaction is ATP + H2O = ADP + phosphate + H(+). Its activity is regulated as follows. Adopts an inactive conformation in absence of DNA damage. Binding to poly-ADP-ribosylated histones activates the ATP-dependent chromatin remodeler activity. Functionally, ATP-dependent chromatin remodeler that mediates chromatin-remodeling following DNA damage. Recruited to DNA damage sites through interaction with poly-ADP-ribose: specifically recognizes and binds histones that are poly-ADP-ribosylated on serine residues in response to DNA damage. Poly-ADP-ribose-binding activates the ATP-dependent chromatin remodeler activity, thereby regulating chromatin during DNA repair. Catalyzes nucleosome sliding away from DNA breaks in an ATP-dependent manner. Chromatin remodeling activity promotes PARP2 removal from chromatin. In Homo sapiens (Human), this protein is Chromodomain-helicase-DNA-binding protein 1-like.